The sequence spans 603 residues: Laccase 1 (603 aa).

The N-terminal stretch at 1–20 is a signal peptide; it reads MSRFARLLLIVALFFTNAWA. Plastocyanin-like domains follow at residues 66–108 and 159–349; these read QRPI…IHIR and LVVS…MRIP. His90 and His92 together coordinate Cu cation. Asn246, Asn269, Asn434, and Asn474 each carry an N-linked (GlcNAc...) asparagine glycan. Residues 460–588 form the Plastocyanin-like 3 domain; that stretch reads TRDTENDGLV…GGMGIAILDG (129 aa). Cu cation is bound by residues His496, His499, and His501. An N-linked (GlcNAc...) asparagine glycan is attached at Asn516. Residues His570, Cys571, His572, and His576 each contribute to the Cu cation site.

It belongs to the multicopper oxidase family. The cofactor is Cu cation.

It is found in the cell surface. The protein operates within pigment biosynthesis. Laccase; part of the Pks1 gene cluster that mediates the biosynthesis of an anthraquinone derivative pigment that contributes to conidial pigmentation that provides protection from UV radiation, heat and cold stress. The polyketide synthase Pks1 produces 1-acetyl-2,4,6,8-tetrahydroxy-9,10-anthraquinone though condensation of acetyl-CoA with malonyl-CoA. The dehydratase EthD and the laccase Mlac1 further convert the anthraquinone derivative into the final conidial pigment. The chain is Laccase 1 from Metarhizium anisopliae (Entomophthora anisopliae).